The sequence spans 225 residues: Endonuclease V (225 aa).

Mg(2+) contacts are provided by Asp43 and Asp110.

Belongs to the endonuclease V family. Requires Mg(2+) as cofactor.

It is found in the cytoplasm. The catalysed reaction is Endonucleolytic cleavage at apurinic or apyrimidinic sites to products with a 5'-phosphate.. DNA repair enzyme involved in the repair of deaminated bases. Selectively cleaves double-stranded DNA at the second phosphodiester bond 3' to a deoxyinosine leaving behind the intact lesion on the nicked DNA. This chain is Endonuclease V, found in Thermotoga sp. (strain RQ2).